The following is a 145-amino-acid chain: MYPAHLLVLLAVCVSLLGATAIPPLPLNLVQFSNLIQCVNKGSRASYHYADYGCYCGAGGSGTPVDELDRCCKIHDDCYGEAEKMGCYPKWTLYTYDCSTEEPNCSTKTGCQGFVCACDLEAAKCFARSPYNNKNYNIDTSKRCK.

Positions 1–21 are cleaved as a signal peptide; the sequence is MYPAHLLVLLAVCVSLLGATA. Positions 22–27 are excised as a propeptide; that stretch reads IPPLPL. 7 cysteine pairs are disulfide-bonded: C38–C98, C54–C144, C56–C72, C71–C125, C78–C118, C87–C111, and C105–C116. Ca(2+) is bound by residues Y55, G57, and G59. The active site involves H75. D76 contributes to the Ca(2+) binding site. D119 is a catalytic residue.

This sequence belongs to the phospholipase A2 family. Group I subfamily. D49 sub-subfamily. In terms of assembly, monomer. Ca(2+) is required as a cofactor. In terms of tissue distribution, expressed by the venom gland.

The protein resides in the secreted. The enzyme catalyses a 1,2-diacyl-sn-glycero-3-phosphocholine + H2O = a 1-acyl-sn-glycero-3-phosphocholine + a fatty acid + H(+). PLA2 catalyzes the calcium-dependent hydrolysis of the 2-acyl groups in 3-sn-phosphoglycerides. The polypeptide is Acidic phospholipase A2 1 (Laticauda semifasciata (Black-banded sea krait)).